A 172-amino-acid chain; its full sequence is uncharacterized protein (172 aa).

Disordered regions lie at residues 1–39 (MAKV…NSNN) and 90–112 (DLNG…GSIN). Over residues 98 to 110 (NDSNNDNSPSRGS) the composition is skewed to low complexity.

This is an uncharacterized protein from Dictyostelium discoideum (Social amoeba).